We begin with the raw amino-acid sequence, 370 residues long: Aminomethyltransferase (370 aa).

This sequence belongs to the GcvT family. The glycine cleavage system is composed of four proteins: P, T, L and H.

The enzyme catalyses N(6)-[(R)-S(8)-aminomethyldihydrolipoyl]-L-lysyl-[protein] + (6S)-5,6,7,8-tetrahydrofolate = N(6)-[(R)-dihydrolipoyl]-L-lysyl-[protein] + (6R)-5,10-methylene-5,6,7,8-tetrahydrofolate + NH4(+). The glycine cleavage system catalyzes the degradation of glycine. The sequence is that of Aminomethyltransferase from Clostridium botulinum (strain Kyoto / Type A2).